A 620-amino-acid polypeptide reads, in one-letter code: Glutathione-regulated potassium-efflux system protein KefC (620 aa).

Over 1-3 (MDS) the chain is Periplasmic. The chain crosses the membrane as a helical span at residues 4–24 (HTLLQALIYLGSAALIVPIAV). Position 25 (Arg-25) is a topological domain, cytoplasmic. The chain crosses the membrane as a helical span at residues 26–46 (LGLGSVLGYLIAGCIIGPWGL). Residues 47-53 (RLVTDAE) are Periplasmic-facing. A helical membrane pass occupies residues 54 to 74 (SILHFAEIGVVLMLFVIGLEL). Residues 75-89 (DPQRLWKLRASVFGG) are Cytoplasmic-facing. Residues 90–110 (GALQMGVCGGLIGLFCMFLGL) traverse the membrane as a helical segment. The Periplasmic portion of the chain corresponds to 111–113 (RWQ). The chain crosses the membrane as a helical span at residues 114–134 (VAELIGMTLALSSTAIAMQAM). Residues 135-148 (NERNLTVSQVGRSA) lie on the Cytoplasmic side of the membrane. A helical transmembrane segment spans residues 149–169 (FAVLLFQDIAAIPLVAMIPLL). At 170–177 (AASGASTT) the chain is on the periplasmic side. Residues 178-198 (LGAFALSALKVAGALALVVLL) form a helical membrane-spanning segment. Residues 199 to 213 (GRYVTRPALRFVARS) are Cytoplasmic-facing. A helical transmembrane segment spans residues 214–233 (GLREVFSAVALFLVFGFGLL). Residues 234–236 (LEE) are Periplasmic-facing. The chain crosses the membrane as a helical span at residues 237-254 (VGLSMAMGAFLAGVLLAS). Residues 255–269 (SEYRHALESDIEPFK) lie on the Cytoplasmic side of the membrane. Residues 270–290 (GLLLGLFFIGVGMSIDFGTLV) form a helical membrane-spanning segment. Topologically, residues 291–293 (ENP) are periplasmic. A helical transmembrane segment spans residues 294-314 (LRILLLLAGFLAIKIVMLWLV). Residues 315–326 (ARPLGVPAKQRR) are Cytoplasmic-facing. The helical transmembrane segment at 327–347 (WFAVLLGQGSEFAFVVFGAAQ) threads the bilayer. Over 348-358 (MADVLEPEWAK) the chain is Periplasmic. Residues 359–379 (ALTLAVALSMAATPIFLVLLT) traverse the membrane as a helical segment. Topologically, residues 380-620 (RMEKTATGEA…ADEPEVKPSI (241 aa)) are cytoplasmic. Residues 399-518 (QPRVIVAGFG…AGVAMPERET (120 aa)) enclose the RCK N-terminal domain. The tract at residues 599 to 620 (QGTAEGKHSGEVADEPEVKPSI) is disordered.

The protein belongs to the monovalent cation:proton antiporter 2 (CPA2) transporter (TC 2.A.37) family. KefC subfamily. Homodimer. Interacts with the regulatory subunit KefF.

The protein localises to the cell inner membrane. In terms of biological role, pore-forming subunit of a potassium efflux system that confers protection against electrophiles. Catalyzes K(+)/H(+) antiport. This Salmonella typhimurium (strain LT2 / SGSC1412 / ATCC 700720) protein is Glutathione-regulated potassium-efflux system protein KefC.